A 208-amino-acid polypeptide reads, in one-letter code: Imidazoleglycerol-phosphate dehydratase (208 aa).

It belongs to the imidazoleglycerol-phosphate dehydratase family.

The protein resides in the cytoplasm. The enzyme catalyses D-erythro-1-(imidazol-4-yl)glycerol 3-phosphate = 3-(imidazol-4-yl)-2-oxopropyl phosphate + H2O. It participates in amino-acid biosynthesis; L-histidine biosynthesis; L-histidine from 5-phospho-alpha-D-ribose 1-diphosphate: step 6/9. The sequence is that of Imidazoleglycerol-phosphate dehydratase from Symbiobacterium thermophilum (strain DSM 24528 / JCM 14929 / IAM 14863 / T).